The chain runs to 656 residues: Mucin-20 (656 aa).

An N-terminal signal peptide occupies residues 1–21 (MGSVWGLAVPLLVFCWKVGVS). Polar residues-rich tracts occupy residues 85-96 (ATSISSEVNSRD), 114-125 (PAASSLEAQTTS), and 159-170 (TTSPAPSFLDTQ). 3 disordered regions span residues 85–125 (ATSI…QTTS), 159–232 (TTSP…TQTI), and 329–348 (YLSSESSSSSDSSAGVLSSS). Positions 171 to 227 (TTSPEPSSLTTSPAPSSLITSPTPSSLTTSPAPSFLDTQTTSPAPSSLTTSPAPSSL) are enriched in low complexity. 5 consecutive repeat copies span residues 180 to 188 (TTSPAPSSL), 189 to 197 (ITSPTPSSL), 198 to 206 (TTSPAPSFL), 210 to 218 (TTSPAPSSL), and 219 to 227 (TTSPAPSSL). The approximate repeats stretch occupies residues 180 to 227 (TTSPAPSSLITSPTPSSLTTSPAPSFLDTQTTSPAPSSLTTSPAPSSL). N-linked (GlcNAc...) asparagine glycans are attached at residues asparagine 366 and asparagine 570. The involved in oligomerization stretch occupies residues 399-603 (TAALFTSEIL…WIRKTTKHDP (205 aa)). Residues 560-573 (STTASTSKNPNITL) show a composition bias toward polar residues. The disordered stretch occupies residues 560 to 592 (STTASTSKNPNITLTKTTASPKPPTHPTTSAST). An interaction with MET region spans residues 604–656 (GEDGGFLLVRLTVASPKDLTEHNAREKLMNQLRRELHARMPLVHMSFLSIRRG).

As to quaternary structure, interacts with MET; oligomerization increases affinity for MET. Highly expressed in kidney. Up-regulated in renal tissues during renal injury.

The protein localises to the secreted. It localises to the apical cell membrane. Its subcellular location is the basolateral cell membrane. It is found in the cell projection. The protein resides in the microvillus membrane. May regulate MET signaling cascade. Seems to decrease hepatocyte growth factor (HGF)-induced transient MAPK activation. Blocks GRB2 recruitment to MET thus suppressing the GRB2-RAS pathway. Inhibits HGF-induced proliferation of MMP1 and MMP9 expression. In Mus musculus (Mouse), this protein is Mucin-20 (Muc20).